Consider the following 130-residue polypeptide: MSGRGKQGGKARAKAKTRSSRAGLQFPVGRVHRLLRKGNYAERVGAGAPVYLAAVLEYLTAEILELAGNAARDNKKTRIIPRHLQLAIRNDEELNKLLGKVTIAQGGVLPNIQAVLLPKKTESHHKAKGK.

The segment at 1–22 is disordered; sequence MSGRGKQGGKARAKAKTRSSRA. Position 2 is an N-acetylserine (serine 2). Residue serine 2 is modified to Phosphoserine; by RPS6KA5. Arginine 4 bears the Citrulline; alternate mark. A Symmetric dimethylarginine; by PRMT5; alternate modification is found at arginine 4. Lysine 6 carries the post-translational modification N6-(2-hydroxyisobutyryl)lysine. Basic residues predominate over residues 7-19; sequence QGGKARAKAKTRS. Lysine 10 is subject to N6-(2-hydroxyisobutyryl)lysine; alternate. At lysine 10 the chain carries N6-lactoyllysine; alternate. At lysine 10 the chain carries N6-succinyllysine; alternate. Residues lysine 14 and lysine 16 each participate in a glycyl lysine isopeptide (Lys-Gly) (interchain with G-Cter in ubiquitin) cross-link. Lysine 37 carries the N6-(2-hydroxyisobutyryl)lysine; alternate modification. Lysine 37 carries the N6-(beta-hydroxybutyryl)lysine; alternate modification. Lysine 37 carries the N6-crotonyllysine; alternate modification. 2 positions are modified to N6-(2-hydroxyisobutyryl)lysine: lysine 75 and lysine 76. N6-(2-hydroxyisobutyryl)lysine; alternate is present on lysine 96. The residue at position 96 (lysine 96) is an N6-succinyllysine; alternate. Lysine 96 carries the post-translational modification N6-glutaryllysine; alternate. Lysine 100 carries the post-translational modification N6-glutaryllysine. Glutamine 105 carries the post-translational modification N5-methylglutamine. Position 119 is an N6-(2-hydroxyisobutyryl)lysine; alternate (lysine 119). N6-crotonyllysine; alternate occurs at positions 119 and 120. N6-glutaryllysine; alternate occurs at positions 119 and 120. Lysine 120 participates in a covalent cross-link: Glycyl lysine isopeptide (Lys-Gly) (interchain with G-Cter in ubiquitin); alternate. Threonine 121 carries the post-translational modification Phosphothreonine; by DCAF1. Position 126 is an N6-crotonyllysine; alternate (lysine 126). The residue at position 126 (lysine 126) is an N6-glutaryllysine; alternate.

The protein belongs to the histone H2A family. In terms of assembly, the nucleosome is a histone octamer containing two molecules each of H2A, H2B, H3 and H4 assembled in one H3-H4 heterotetramer and two H2A-H2B heterodimers. The octamer wraps approximately 147 bp of DNA. Interacts with VRK1; the interaction is mediated by the nucleosome acidic patch, a cluster of negatively charged residues of H2A and H2B forming a cleft within the nucleosome core. Post-translationally, deiminated on Arg-4 in granulocytes upon calcium entry. Monoubiquitination of Lys-120 (H2AK119Ub) by RING1, TRIM37 and RNF2/RING2 complex gives a specific tag for epigenetic transcriptional repression and participates in X chromosome inactivation of female mammals. It is involved in the initiation of both imprinted and random X inactivation. Ubiquitinated H2A is enriched in inactive X chromosome chromatin. Ubiquitination of H2A functions downstream of methylation of 'Lys-27' of histone H3 (H3K27me). H2AK119Ub by RNF2/RING2 can also be induced by ultraviolet and may be involved in DNA repair. Following DNA double-strand breaks (DSBs), it is ubiquitinated through 'Lys-63' linkage of ubiquitin moieties by the E2 ligase UBE2N and the E3 ligases RNF8 and RNF168, leading to the recruitment of repair proteins to sites of DNA damage. Ubiquitination at Lys-14 and Lys-16 (H2AK13Ub and H2AK15Ub, respectively) in response to DNA damage is initiated by RNF168 that mediates monoubiquitination at these 2 sites, and 'Lys-63'-linked ubiquitin are then conjugated to monoubiquitin; RNF8 is able to extend 'Lys-63'-linked ubiquitin chains in vitro. H2AK119Ub and ionizing radiation-induced 'Lys-63'-linked ubiquitination (H2AK13Ub and H2AK15Ub) are distinct events. In terms of processing, phosphorylation on Ser-2 (H2AS1ph) is enhanced during mitosis. Phosphorylation on Ser-2 by RPS6KA5/MSK1 directly represses transcription. Acetylation of H3 inhibits Ser-2 phosphorylation by RPS6KA5/MSK1. Phosphorylation at Thr-121 (H2AT120ph) by DCAF1 is present in the regulatory region of many tumor suppresor genes and down-regulates their transcription. Post-translationally, symmetric dimethylation on Arg-4 by the PRDM1/PRMT5 complex may play a crucial role in the germ-cell lineage. Glutamine methylation at Gln-105 (H2AQ104me) by FBL is specifically dedicated to polymerase I. It is present at 35S ribosomal DNA locus and impairs binding of the FACT complex. In terms of processing, crotonylation (Kcr) is specifically present in male germ cells and marks testis-specific genes in post-meiotic cells, including X-linked genes that escape sex chromosome inactivation in haploid cells. Crotonylation marks active promoters and enhancers and confers resistance to transcriptional repressors. It is also associated with post-meiotically activated genes on autosomes. Post-translationally, lactylated in macrophages by EP300/P300 by using lactoyl-CoA directly derived from endogenous or exogenous lactate, leading to stimulates gene transcription.

The protein resides in the nucleus. It is found in the chromosome. In terms of biological role, core component of nucleosome. Nucleosomes wrap and compact DNA into chromatin, limiting DNA accessibility to the cellular machineries which require DNA as a template. Histones thereby play a central role in transcription regulation, DNA repair, DNA replication and chromosomal stability. DNA accessibility is regulated via a complex set of post-translational modifications of histones, also called histone code, and nucleosome remodeling. This is Histone H2A type 1 from Bos taurus (Bovine).